The sequence spans 319 residues: Nuclear hormone receptor family member nhr-174 (319 aa).

The nuclear receptor DNA-binding region spans aspartate 7 to glutamine 81. 2 consecutive NR C4-type zinc fingers follow at residues cysteine 10 to cysteine 31 and cysteine 47 to cysteine 63. Positions glutamate 130–phenylalanine 319 constitute an NR LBD domain.

Belongs to the nuclear hormone receptor family.

It localises to the nucleus. Functionally, orphan nuclear receptor. The sequence is that of Nuclear hormone receptor family member nhr-174 (nhr-174) from Caenorhabditis elegans.